A 130-amino-acid chain; its full sequence is MVKNSSVRTRKRVKKQITDGIAHIHASFNNTIVTITDRQGNALGWATSGGSGFRGSRKSTPFAAQIAAERCAEIVKDYGIKNLEVMVKGPGPGRESTIRALNAAGFRITNITDVTPIPHNGCRPPKKRRV.

The protein belongs to the universal ribosomal protein uS11 family. In terms of assembly, part of the 30S ribosomal subunit. Interacts with proteins S7 and S18. Binds to IF-3.

In terms of biological role, located on the platform of the 30S subunit, it bridges several disparate RNA helices of the 16S rRNA. Forms part of the Shine-Dalgarno cleft in the 70S ribosome. The protein is Small ribosomal subunit protein uS11 of Buchnera aphidicola subsp. Schizaphis graminum (strain Sg).